Reading from the N-terminus, the 877-residue chain is Alanine--tRNA ligase (877 aa).

The Zn(2+) site is built by H564, H568, C666, and H670.

It belongs to the class-II aminoacyl-tRNA synthetase family. Requires Zn(2+) as cofactor.

The protein localises to the cytoplasm. The enzyme catalyses tRNA(Ala) + L-alanine + ATP = L-alanyl-tRNA(Ala) + AMP + diphosphate. Functionally, catalyzes the attachment of alanine to tRNA(Ala) in a two-step reaction: alanine is first activated by ATP to form Ala-AMP and then transferred to the acceptor end of tRNA(Ala). Also edits incorrectly charged Ser-tRNA(Ala) and Gly-tRNA(Ala) via its editing domain. The chain is Alanine--tRNA ligase from Pelotomaculum thermopropionicum (strain DSM 13744 / JCM 10971 / SI).